The sequence spans 38 residues: uncharacterized protein (38 aa).

This is an uncharacterized protein from Acidianus two-tailed virus (ATV).